The sequence spans 465 residues: Phosphomethylpyrimidine synthase (465 aa).

Residues asparagine 80, methionine 109, tyrosine 139, histidine 175, 195–197 (SRG), 236–239 (DSLR), and glutamate 275 each bind substrate. A Zn(2+)-binding site is contributed by histidine 279. Tyrosine 302 contributes to the substrate binding site. Histidine 343 serves as a coordination point for Zn(2+). Residues cysteine 423, cysteine 426, and cysteine 431 each coordinate [4Fe-4S] cluster.

This sequence belongs to the ThiC family. The cofactor is [4Fe-4S] cluster.

It carries out the reaction 5-amino-1-(5-phospho-beta-D-ribosyl)imidazole + S-adenosyl-L-methionine = 4-amino-2-methyl-5-(phosphooxymethyl)pyrimidine + CO + 5'-deoxyadenosine + formate + L-methionine + 3 H(+). It participates in cofactor biosynthesis; thiamine diphosphate biosynthesis. Catalyzes the synthesis of the hydroxymethylpyrimidine phosphate (HMP-P) moiety of thiamine from aminoimidazole ribotide (AIR) in a radical S-adenosyl-L-methionine (SAM)-dependent reaction. The sequence is that of Phosphomethylpyrimidine synthase from Synechococcus sp. (strain CC9311).